Here is a 66-residue protein sequence, read N- to C-terminus: Large ribosomal subunit protein uL30 (66 aa).

The protein belongs to the universal ribosomal protein uL30 family. As to quaternary structure, part of the 50S ribosomal subunit.

This chain is Large ribosomal subunit protein uL30, found in Azorhizobium caulinodans (strain ATCC 43989 / DSM 5975 / JCM 20966 / LMG 6465 / NBRC 14845 / NCIMB 13405 / ORS 571).